The following is a 604-amino-acid chain: Glutamine--fructose-6-phosphate aminotransferase [isomerizing] (604 aa).

The Nucleophile; for GATase activity role is filled by cysteine 2. The Glutamine amidotransferase type-2 domain occupies 2–216; it reads CGIVGYVGFR…DGDVVRLTRE (215 aa). SIS domains are found at residues 281–420 and 453–594; these read LALD…ARGA and VAEK…VDQP. Lysine 599 (for Fru-6P isomerization activity) is an active-site residue.

Homodimer.

The protein localises to the cytoplasm. It catalyses the reaction D-fructose 6-phosphate + L-glutamine = D-glucosamine 6-phosphate + L-glutamate. Functionally, catalyzes the first step in hexosamine metabolism, converting fructose-6P into glucosamine-6P using glutamine as a nitrogen source. The protein is Glutamine--fructose-6-phosphate aminotransferase [isomerizing] of Thermus thermophilus (strain ATCC BAA-163 / DSM 7039 / HB27).